Reading from the N-terminus, the 431-residue chain is Enolase (431 aa).

Gln167 contributes to the (2R)-2-phosphoglycerate binding site. Glu209 (proton donor) is an active-site residue. Mg(2+) is bound by residues Asp246, Glu289, and Asp316. (2R)-2-phosphoglycerate is bound by residues Lys341, Arg370, Ser371, and Lys392. The Proton acceptor role is filled by Lys341.

The protein belongs to the enolase family. Component of the RNA degradosome, a multiprotein complex involved in RNA processing and mRNA degradation. Mg(2+) is required as a cofactor.

Its subcellular location is the cytoplasm. The protein localises to the secreted. It localises to the cell surface. The catalysed reaction is (2R)-2-phosphoglycerate = phosphoenolpyruvate + H2O. It participates in carbohydrate degradation; glycolysis; pyruvate from D-glyceraldehyde 3-phosphate: step 4/5. In terms of biological role, catalyzes the reversible conversion of 2-phosphoglycerate (2-PG) into phosphoenolpyruvate (PEP). It is essential for the degradation of carbohydrates via glycolysis. The polypeptide is Enolase (Shewanella woodyi (strain ATCC 51908 / MS32)).